The following is a 349-amino-acid chain: MNIKSALNRVVNQLDLSTDEMRDVMREIMTGQCTEAQIGAFLMGMRMKSETIDEIVGAVSVMRELADKVELKTLDGVVDIVGTGGDGANIFNVSTASAFVISAAGCTVAKHGNRAVSGKSGSADLLEAAGVYLNLTPVQVARCIDSVGIGFMFAQSHHSAMKHTAGPRRELGLRTLFNMLGPLTNPAGVRHQVVGVFNQALCRPLAEVLLRLGSKHVLVVHSQDGLDEFSLAAPTFVAELKNGEVTEYWVQPEDLGIKSQSLYGLAVESPAQSLELIRDALGRRKTEIGQKAAEMIVLNAGAALYAADHATSLKEGVALAHDALHTGLAREKLDELGAFTAVFKQENEA.

Residues glycine 82, 85–86 (GD), 92–95 (NVST), 110–118 (KHGNRAVSG), and serine 122 contribute to the 5-phospho-alpha-D-ribose 1-diphosphate site. Glycine 82 contributes to the anthranilate binding site. Serine 94 lines the Mg(2+) pocket. Asparagine 113 is a binding site for anthranilate. Residue arginine 168 participates in anthranilate binding. Positions 227 and 228 each coordinate Mg(2+).

It belongs to the anthranilate phosphoribosyltransferase family. As to quaternary structure, homodimer. Mg(2+) is required as a cofactor.

It carries out the reaction N-(5-phospho-beta-D-ribosyl)anthranilate + diphosphate = 5-phospho-alpha-D-ribose 1-diphosphate + anthranilate. It functions in the pathway amino-acid biosynthesis; L-tryptophan biosynthesis; L-tryptophan from chorismate: step 2/5. Catalyzes the transfer of the phosphoribosyl group of 5-phosphorylribose-1-pyrophosphate (PRPP) to anthranilate to yield N-(5'-phosphoribosyl)-anthranilate (PRA). The sequence is that of Anthranilate phosphoribosyltransferase from Pseudomonas syringae pv. tomato (strain ATCC BAA-871 / DC3000).